A 177-amino-acid polypeptide reads, in one-letter code: Ribulose bisphosphate carboxylase small subunit, chloroplastic (177 aa).

A chloroplast-targeting transit peptide spans 1–55 (MASLMSNAAVVTASTAAQANMVAPFSGLKSTSAFPVSRKSNVDITSLATNGGRVN).

Belongs to the RuBisCO small chain family. In terms of assembly, heterohexadecamer of 8 large and 8 small subunits.

The protein resides in the plastid. It localises to the chloroplast. In terms of biological role, ruBisCO catalyzes two reactions: the carboxylation of D-ribulose 1,5-bisphosphate, the primary event in carbon dioxide fixation, as well as the oxidative fragmentation of the pentose substrate. Both reactions occur simultaneously and in competition at the same active site. Although the small subunit is not catalytic it is essential for maximal activity. The polypeptide is Ribulose bisphosphate carboxylase small subunit, chloroplastic (Silene latifolia subsp. alba (White campion)).